Consider the following 71-residue polypeptide: uncharacterized protein (71 aa).

The protein localises to the mitochondrion matrix. Its subcellular location is the kinetoplast. This is an uncharacterized protein from Trypanosoma brucei brucei.